The primary structure comprises 114 residues: Acetyltransferase At1g77540 (114 aa).

T2 is modified (N-acetylthreonine). In terms of domain architecture, N-acetyltransferase spans 18–106 (KIVWNEGKRR…RNPSWKPLIH (89 aa)). Residues 52–55 (HTYV) and 61–66 (GLGLAS) each bind CoA. Residue C87 is the Nucleophile of the active site. Residues 88–89 (SY), T93, and R97 each bind CoA.

It is found in the peroxisome. Functionally, possesses in vitro histone acetyltransferase activity with histones H3 and H4. This chain is Acetyltransferase At1g77540, found in Arabidopsis thaliana (Mouse-ear cress).